An 85-amino-acid polypeptide reads, in one-letter code: Insect toxin 2-53 (85 aa).

The first 21 residues, 1-21 (MKLLLLLIVSASMLIESLVNA), serve as a signal peptide directing secretion. In terms of domain architecture, LCN-type CS-alpha/beta spans 22–82 (DGYIKRRDGC…TWKSETNTCG (61 aa)). Disulfide bonds link C31–C81, C35–C56, C42–C63, and C46–C65. G82 bears the Glycine amide mark.

This sequence belongs to the long (4 C-C) scorpion toxin superfamily. Sodium channel inhibitor family. Beta subfamily. In terms of tissue distribution, expressed by the venom gland.

Its subcellular location is the secreted. Functionally, depressant insect toxins cause a transient contraction paralysis followed by a slow flaccid paralysis. They bind voltage-independently to sodium channels (Nav) and block action potentials, primarily by depolarizing the axonal membrane and suppressing the sodium current. The chain is Insect toxin 2-53 from Leiurus hebraeus (Hebrew deathstalker scorpion).